The primary structure comprises 367 residues: CCCH-type zinc finger protein moe-3 (367 aa).

Positions 1-15 (MSKVKGDLEKSDKRP) are enriched in basic and acidic residues. Residues 1 to 57 (MSKVKGDLEKSDKRPPSSMSTGSADSGVFSSGVHASSPSHSQGSSSQSGPPSPTTQL) are disordered. Residues 30–49 (SSGVHASSPSHSQGSSSQSG) show a composition bias toward low complexity. Residues 63-92 (ETANLIAVNEQLRKEIAENKQIQTNQMRAL) adopt a coiled-coil conformation. The interval 107 to 126 (SISPHHGFPQRPPRGERRMQ) is disordered. C3H1-type zinc fingers lie at residues 130 to 158 (SYKT…HGEE) and 172 to 200 (KYKT…HPDN). The tract at residues 235-268 (NTRNSYNQQPPPMGGLEMQSSPMKSSSDSSHMRS) is disordered. The span at 252 to 268 (MQSSPMKSSSDSSHMRS) shows a compositional bias: low complexity.

In terms of tissue distribution, exclusively expressed in the hermaphrodite gonad. Weakly distributed throughout gonadal oocytes from the mitotic stage to the developing diakinesis stage, with expression restricted to the distal region of the gonad.

Its function is as follows. Zinc-finger protein that may play a role in oocyte maturation and fertility. The polypeptide is CCCH-type zinc finger protein moe-3 (Caenorhabditis elegans).